The primary structure comprises 193 residues: Acyl-homoserine-lactone synthase (193 aa).

It belongs to the autoinducer synthase family.

The catalysed reaction is a fatty acyl-[ACP] + S-adenosyl-L-methionine = an N-acyl-L-homoserine lactone + S-methyl-5'-thioadenosine + holo-[ACP] + H(+). In terms of biological role, required for the synthesis of OHHL (N-(3-oxohexanoyl)-L-homoserine lactone) also known as VAI or N-(beta-ketocaproyl)homoserine lactone or 3-oxo-N-(tetrahydro-2-oxo-3-furanyl)-hexanamide, an autoinducer molecule which binds to LuxR and thus acts in bioluminescence regulation. This chain is Acyl-homoserine-lactone synthase (luxI), found in Aliivibrio fischeri (strain ATCC 700601 / ES114) (Vibrio fischeri).